The chain runs to 117 residues: UPF0342 protein LGAS_1451 (117 aa).

It belongs to the UPF0342 family.

The chain is UPF0342 protein LGAS_1451 from Lactobacillus gasseri (strain ATCC 33323 / DSM 20243 / BCRC 14619 / CIP 102991 / JCM 1131 / KCTC 3163 / NCIMB 11718 / NCTC 13722 / AM63).